Reading from the N-terminus, the 137-residue chain is Small ribosomal subunit protein uS11 (137 aa).

Residues 1 to 25 (MADRRRGAARGGAARPRRRERKNIP) are disordered. Basic residues predominate over residues 15 to 25 (RPRRRERKNIP).

This sequence belongs to the universal ribosomal protein uS11 family. In terms of assembly, part of the 30S ribosomal subunit. Interacts with proteins S7 and S18. Binds to IF-3.

Functionally, located on the platform of the 30S subunit, it bridges several disparate RNA helices of the 16S rRNA. Forms part of the Shine-Dalgarno cleft in the 70S ribosome. The chain is Small ribosomal subunit protein uS11 from Thermomicrobium roseum (strain ATCC 27502 / DSM 5159 / P-2).